A 141-amino-acid chain; its full sequence is Proteasome maturation protein (141 aa).

Residue K39 forms a Glycyl lysine isopeptide (Lys-Gly) (interchain with G-Cter in SUMO2) linkage. Positions 68–72 (RNIQG) match the High-affinity association with the preproteasome motif.

Belongs to the POMP/UMP1 family. Constituent of preproteasomes, but not of mature 20S proteasomes. Within the preproteasome, may directly interact with PSMB1/beta6, PSMB4/beta7, PSMB5/beta5, PSMB6/beta1 and PSMB9/beta1i. Interaction with PSMB8/beta5i has been observed in PubMed:10973495, but not in PubMed:10926487. Forms tetramers. As to expression, strongly expressed from the basal layer to the granular layer of healthy epidermis, whereas in KLICK patients there is a gradual decrease of expression toward the granular layer.

It localises to the cytoplasm. It is found in the cytosol. The protein resides in the nucleus. The protein localises to the microsome membrane. Molecular chaperone essential for the assembly of standard proteasomes and immunoproteasomes. Degraded after completion of proteasome maturation. Mediates the association of 20S preproteasome with the endoplasmic reticulum. The sequence is that of Proteasome maturation protein from Homo sapiens (Human).